The chain runs to 258 residues: Global transcriptional regulator CodY (258 aa).

Residues 1–156 (MSILLNKTRK…SATIVGLEIL (156 aa)) are GAF domain. The H-T-H motif DNA-binding region spans 204–223 (ASKIADKVGITRSVIVNALR).

It belongs to the CodY family.

The protein localises to the cytoplasm. In terms of biological role, DNA-binding global transcriptional regulator which is involved in the adaptive response to starvation and acts by directly or indirectly controlling the expression of numerous genes in response to nutrient availability. During rapid exponential growth, CodY is highly active and represses genes whose products allow adaptation to nutrient depletion. In Clostridium acetobutylicum (strain ATCC 824 / DSM 792 / JCM 1419 / IAM 19013 / LMG 5710 / NBRC 13948 / NRRL B-527 / VKM B-1787 / 2291 / W), this protein is Global transcriptional regulator CodY.